Reading from the N-terminus, the 77-residue chain is Translation initiation factor IF-1, chloroplastic (77 aa).

Residues 1-71 enclose the S1-like domain; that stretch reads MKEQKWIHEG…TKGRIIYRIR (71 aa).

Belongs to the IF-1 family. Component of the 30S ribosomal translation pre-initiation complex which assembles on the 30S ribosome in the order IF-2 and IF-3, IF-1 and N-formylmethionyl-tRNA(fMet); mRNA recruitment can occur at any time during PIC assembly.

The protein resides in the plastid. It is found in the chloroplast. Functionally, one of the essential components for the initiation of protein synthesis. Stabilizes the binding of IF-2 and IF-3 on the 30S subunit to which N-formylmethionyl-tRNA(fMet) subsequently binds. Helps modulate mRNA selection, yielding the 30S pre-initiation complex (PIC). Upon addition of the 50S ribosomal subunit IF-1, IF-2 and IF-3 are released leaving the mature 70S translation initiation complex. This is Translation initiation factor IF-1, chloroplastic from Vitis vinifera (Grape).